The chain runs to 209 residues: 3-demethoxyubiquinol 3-hydroxylase (209 aa).

Fe cation-binding residues include glutamate 58, glutamate 88, histidine 91, glutamate 140, glutamate 172, and histidine 175.

The protein belongs to the COQ7 family. Fe cation serves as cofactor.

The protein resides in the cell membrane. The enzyme catalyses a 5-methoxy-2-methyl-3-(all-trans-polyprenyl)benzene-1,4-diol + AH2 + O2 = a 3-demethylubiquinol + A + H2O. It functions in the pathway cofactor biosynthesis; ubiquinone biosynthesis. Catalyzes the hydroxylation of 2-nonaprenyl-3-methyl-6-methoxy-1,4-benzoquinol during ubiquinone biosynthesis. The sequence is that of 3-demethoxyubiquinol 3-hydroxylase from Polaromonas naphthalenivorans (strain CJ2).